A 184-amino-acid chain; its full sequence is ATP-dependent protease subunit HslV (184 aa).

Residue T12 is part of the active site. Na(+)-binding residues include A166, C169, and T172.

The protein belongs to the peptidase T1B family. HslV subfamily. A double ring-shaped homohexamer of HslV is capped on each side by a ring-shaped HslU homohexamer. The assembly of the HslU/HslV complex is dependent on binding of ATP.

The protein localises to the cytoplasm. It catalyses the reaction ATP-dependent cleavage of peptide bonds with broad specificity.. Allosterically activated by HslU binding. Functionally, protease subunit of a proteasome-like degradation complex believed to be a general protein degrading machinery. In Nitrobacter hamburgensis (strain DSM 10229 / NCIMB 13809 / X14), this protein is ATP-dependent protease subunit HslV.